An 83-amino-acid polypeptide reads, in one-letter code: MSTLRELRLRRALKEQSMRYLLSIKKTLPRWKGALIGLFLICVATISGCASESKLPEPPMVSVDSSLMVEPNLTTEMLNVFSQ.

The N-terminal stretch at 1 to 50 is a signal peptide; that stretch reads MSTLRELRLRRALKEQSMRYLLSIKKTLPRWKGALIGLFLICVATISGCA.

The protein belongs to the T7likevirus o-spanin family. Homodimer. Interacts (via C-terminus) with the spanin inner membrane subunit (via C-terminus). Part of the spanin complex which spans the entire periplasmic space. The spanin complex is composed of spanin inner membrane subunit and spanin outer membrane subunit.

Its subcellular location is the host cell outer membrane. Functionally, component of the spanin complex that disrupts the host outer membrane and participates in cell lysis during virus exit. The spanin complex conducts the final step in host lysis by disrupting the outer membrane after holin and endolysin action have permeabilized the inner membrane and degraded the host peptidoglycans. Host outer membrane disruption is possibly due to local fusion between the inner and outer membrane performed by the spanin complex. This is Spanin, outer lipoprotein subunit from Escherichia phage T7 (Bacteriophage T7).